A 524-amino-acid chain; its full sequence is Rho guanine nucleotide exchange factor 3 (524 aa).

2 positions are modified to phosphoserine: serine 46 and serine 69. A DH domain is found at 121–303 (KRQEAIFELS…QGIVAEINTK (183 aa)). The PH domain occupies 290 to 448 (INIIQGIVAE…WLNCIRQAKE (159 aa)). The interval 461 to 524 (DSEGLVQGPG…CANSRPEESV (64 aa)) is disordered. The segment covering 472 to 484 (ENREPQGETKLEQ) has biased composition (basic and acidic residues).

As to quaternary structure, interacts with RHOA and RHOB.

The protein resides in the cytoplasm. Its function is as follows. Acts as a guanine nucleotide exchange factor (GEF) for RhoA and RhoB GTPases. This chain is Rho guanine nucleotide exchange factor 3 (Arhgef3), found in Mus musculus (Mouse).